A 428-amino-acid chain; its full sequence is 3-phosphoshikimate 1-carboxyvinyltransferase (428 aa).

3-phosphoshikimate contacts are provided by Lys23, Ser24, and Arg28. Lys23 lines the phosphoenolpyruvate pocket. Phosphoenolpyruvate contacts are provided by Gly97 and Arg125. 3-phosphoshikimate-binding residues include Ser170, Ser171, Gln172, Ser198, Asp314, Asn337, and Lys341. Residue Gln172 coordinates phosphoenolpyruvate. The Proton acceptor role is filled by Asp314. Residues Arg345, Arg387, and Lys412 each coordinate phosphoenolpyruvate.

The protein belongs to the EPSP synthase family. In terms of assembly, monomer.

The protein resides in the cytoplasm. The enzyme catalyses 3-phosphoshikimate + phosphoenolpyruvate = 5-O-(1-carboxyvinyl)-3-phosphoshikimate + phosphate. The protein operates within metabolic intermediate biosynthesis; chorismate biosynthesis; chorismate from D-erythrose 4-phosphate and phosphoenolpyruvate: step 6/7. Its function is as follows. Catalyzes the transfer of the enolpyruvyl moiety of phosphoenolpyruvate (PEP) to the 5-hydroxyl of shikimate-3-phosphate (S3P) to produce enolpyruvyl shikimate-3-phosphate and inorganic phosphate. This Serratia proteamaculans (strain 568) protein is 3-phosphoshikimate 1-carboxyvinyltransferase.